The following is a 391-amino-acid chain: Oxygen-dependent coproporphyrinogen-III oxidase, chloroplastic (391 aa).

Polar residues predominate over residues M1–L13. The tract at residues M1–F34 is disordered. Residues A14–A30 show a composition bias toward low complexity. Positions V125–K134 are important for dimerization. S179 provides a ligand contact to substrate. H193 serves as the catalytic Proton donor. Substrate-binding positions include N195–R197 and G349–S354. The interval Y331 to E366 is important for dimerization.

It belongs to the aerobic coproporphyrinogen-III oxidase family. In terms of assembly, homodimer.

The protein localises to the plastid. It localises to the chloroplast. It catalyses the reaction coproporphyrinogen III + O2 + 2 H(+) = protoporphyrinogen IX + 2 CO2 + 2 H2O. It participates in porphyrin-containing compound metabolism; protoporphyrin-IX biosynthesis; protoporphyrinogen-IX from coproporphyrinogen-III (O2 route): step 1/1. Functionally, involved in the heme and chlorophyll biosynthesis. Catalyzes the aerobic oxidative decarboxylation of propionate groups of rings A and B of coproporphyrinogen-III to yield the vinyl groups in protoporphyrinogen-IX. In Hordeum vulgare (Barley), this protein is Oxygen-dependent coproporphyrinogen-III oxidase, chloroplastic (CPX).